The chain runs to 109 residues: Protein ripply2 (109 aa).

Residues 1–15 (MENITFTSGLNSEMD) show a composition bias toward polar residues. 2 disordered regions span residues 1 to 42 (MENI…RPAD) and 88 to 109 (YEDPDTEDEEDYSDEEDEKELR). Residues 20 to 23 (WRPW) carry the WRPW motif motif. Residues 30–42 (KAPDYKPYKRPAD) are compositionally biased toward basic and acidic residues. The ripply homology domain stretch occupies residues 53–88 (HPVKLFWPKSQCFDYLYEDAEVLLRNYPVQATICLY). A compositionally biased stretch (acidic residues) spans 89-109 (EDPDTEDEEDYSDEEDEKELR).

It belongs to the ripply family. First expressed in the paraxial mesoderm at the 90% epiboly stage, and subsequently confined to the presomitic mesoderm. Expressed in the rostral compartment of S-I and S-II.

It is found in the nucleus. Functionally, plays a role in somitogenesis. Required for somite segregation and establishment of rostrocaudal polarity in somites. In Danio rerio (Zebrafish), this protein is Protein ripply2.